The chain runs to 101 residues: NAD(P)H-quinone oxidoreductase subunit 4L, chloroplastic (101 aa).

3 helical membrane passes run 2–22 (ILEHVLVLSAYLFSIGIYGLI), 32–52 (MCLELILNAVNINFVTFSDFF), and 61–81 (IFSIFVIAIAAAEAAIGLAIV).

It belongs to the complex I subunit 4L family. As to quaternary structure, NDH is composed of at least 16 different subunits, 5 of which are encoded in the nucleus.

The protein localises to the plastid. It localises to the chloroplast thylakoid membrane. The enzyme catalyses a plastoquinone + NADH + (n+1) H(+)(in) = a plastoquinol + NAD(+) + n H(+)(out). It catalyses the reaction a plastoquinone + NADPH + (n+1) H(+)(in) = a plastoquinol + NADP(+) + n H(+)(out). Functionally, NDH shuttles electrons from NAD(P)H:plastoquinone, via FMN and iron-sulfur (Fe-S) centers, to quinones in the photosynthetic chain and possibly in a chloroplast respiratory chain. The immediate electron acceptor for the enzyme in this species is believed to be plastoquinone. Couples the redox reaction to proton translocation, and thus conserves the redox energy in a proton gradient. This Nicotiana sylvestris (Wood tobacco) protein is NAD(P)H-quinone oxidoreductase subunit 4L, chloroplastic.